The following is a 612-amino-acid chain: Peroxisomal carnitine O-octanoyltransferase (612 aa).

Position 1 is an N-acetylmethionine (methionine 1). N6-succinyllysine is present on residues lysine 40 and lysine 57. The active-site Proton acceptor is histidine 327. CoA contacts are provided by residues lysine 406 and 410-417; that span reads KEKQLHPD. Lysine 406 is modified (N6-acetyllysine; alternate). Residue lysine 406 is modified to N6-succinyllysine; alternate. Residues tyrosine 439, threonine 441, and threonine 452 each contribute to the (R)-carnitine site. A Microbody targeting signal motif is present at residues 610-612; it reads PHL.

It belongs to the carnitine/choline acetyltransferase family. Monomer.

It localises to the peroxisome. It catalyses the reaction octanoyl-CoA + (R)-carnitine = O-octanoyl-(R)-carnitine + CoA. The enzyme catalyses 4,8-dimethylnonanoyl-CoA + (R)-carnitine = O-4,8-dimethylnonanoyl-(R)-carnitine + CoA. It functions in the pathway lipid metabolism; fatty acid beta-oxidation. Beta-oxidation of fatty acids. The highest activity concerns the C6 to C10 chain length substrate. This Bos taurus (Bovine) protein is Peroxisomal carnitine O-octanoyltransferase (CROT).